The sequence spans 352 residues: N-acetyl-gamma-glutamyl-phosphate reductase (352 aa).

Cys151 is an active-site residue.

The protein belongs to the NAGSA dehydrogenase family. Type 1 subfamily.

The protein resides in the cytoplasm. The catalysed reaction is N-acetyl-L-glutamate 5-semialdehyde + phosphate + NADP(+) = N-acetyl-L-glutamyl 5-phosphate + NADPH + H(+). Its pathway is amino-acid biosynthesis; L-arginine biosynthesis; N(2)-acetyl-L-ornithine from L-glutamate: step 3/4. Functionally, catalyzes the NADPH-dependent reduction of N-acetyl-5-glutamyl phosphate to yield N-acetyl-L-glutamate 5-semialdehyde. The protein is N-acetyl-gamma-glutamyl-phosphate reductase of Renibacterium salmoninarum (strain ATCC 33209 / DSM 20767 / JCM 11484 / NBRC 15589 / NCIMB 2235).